A 38-amino-acid polypeptide reads, in one-letter code: Small ribosomal subunit protein uS12c (38 aa).

Positions 1 to 26 (MPTIQQLIRNARQPIENRKKSPALRG) are disordered.

The protein belongs to the universal ribosomal protein uS12 family. In terms of assembly, part of the 30S ribosomal subunit.

The protein resides in the plastid. Its subcellular location is the chloroplast. With S4 and S5 plays an important role in translational accuracy. Located at the interface of the 30S and 50S subunits. This chain is Small ribosomal subunit protein uS12c (rps12), found in Pinus contorta (Shore pine).